Reading from the N-terminus, the 298-residue chain is Ribosomal RNA small subunit methyltransferase H (298 aa).

S-adenosyl-L-methionine contacts are provided by residues 37-39 (GGH), Asp-57, Leu-91, Asp-105, and Gln-112.

This sequence belongs to the methyltransferase superfamily. RsmH family.

The protein localises to the cytoplasm. It carries out the reaction cytidine(1402) in 16S rRNA + S-adenosyl-L-methionine = N(4)-methylcytidine(1402) in 16S rRNA + S-adenosyl-L-homocysteine + H(+). Its function is as follows. Specifically methylates the N4 position of cytidine in position 1402 (C1402) of 16S rRNA. The sequence is that of Ribosomal RNA small subunit methyltransferase H from Kosmotoga olearia (strain ATCC BAA-1733 / DSM 21960 / TBF 19.5.1).